A 438-amino-acid polypeptide reads, in one-letter code: Ammonium transporter Rh type A (438 aa).

Topologically, residues 1 to 4 (MRFK) are cytoplasmic. The helical transmembrane segment at 5–25 (FPLMAISLEVAMIVLFGLFVE) threads the bilayer. Residues 26-61 (YETPQNASQKNASHQNASQQGNTSSSAKKDQFFQLY) lie on the Extracellular side of the membrane. N-linked (GlcNAc...) asparagine glycosylation is found at Asn31, Asn36, Asn41, and Asn47. A helical membrane pass occupies residues 62–82 (PLFQDVHVMIFVGFGFLMTFL). Over 83–86 (KKYG) the chain is Cytoplasmic. A helical transmembrane segment spans residues 87–107 (FSGVGFNLFLAALGLQWGTIM). Topologically, residues 108 to 121 (QGLLHSHGKEFHFG) are extracellular. Residues 122–142 (IYNMINADFSTATVLISFGAV) form a helical membrane-spanning segment. Residues 143-148 (LGKTSP) are Cytoplasmic-facing. Residues 149 to 169 (IQMLIMTILEIAVFAGNEYLV) form a helical membrane-spanning segment. Over 170-178 (TELFEASDT) the chain is Extracellular. A helical membrane pass occupies residues 179-199 (GASMTIHAFGAYFGLAVAGVL). The Cytoplasmic portion of the chain corresponds to 200 to 218 (YRPGLRCEHPNDESVYHSD). A helical transmembrane segment spans residues 219 to 239 (LFAMIGTLFLWIFWPSFNSAI). The Extracellular portion of the chain corresponds to 240–249 (ADPGDHQYRA). Residues 250-270 (IVNTYMSLAACVITAYALSSL) form a helical membrane-spanning segment. Residues 271–278 (VERRGRLD) lie on the Cytoplasmic side of the membrane. A helical transmembrane segment spans residues 279–296 (MVHIQNATLAGGVAVGTC). Residues 297 to 300 (ADME) are Extracellular-facing. A helical membrane pass occupies residues 301-321 (IPLYAAMTIGSIAGIISVLGY). Residues 322–342 (KFFSPLLANKLMIHDTCGVHN) lie on the Cytoplasmic side of the membrane. Residues 343–363 (LHGLPGVFGGLASIVAISWGM) form a helical membrane-spanning segment. Residues 364-372 (STASMAMQA) are Extracellular-facing. Residues 373–393 (AALGSSIGSAIVGGLLTGLIL) form a helical membrane-spanning segment. Over 394 to 438 (KLPIWNQPPDEYCYDDSVSWKVPKFRELDNRFFQHANHNHVEHEV) the chain is Cytoplasmic.

This sequence belongs to the ammonium transporter (TC 2.A.49) family. Rh subfamily. Homodimer. Heterotrimer; a RHCE monomer interacts with a RHAG homodimer. Component of the ankyrin-1 complex in the erythrocyte, composed of ANK1, RHCE, RHAG, SLC4A1, EPB42, GYPA, GYPB and AQP1. Interacts with GYPB (via the N-terminal); this interaction bridges the (RHAG)2(RHCE) heterotrimer with the SLC4A1 Band 3 I dimer complexed with GYPA. Post-translationally, glycosylated.

The protein localises to the membrane. It catalyses the reaction methylamine(out) = methylamine(in). The enzyme catalyses NH4(+)(in) = NH4(+)(out). It carries out the reaction CO2(out) = CO2(in). Functionally, component of the ankyrin-1 complex, a multiprotein complex involved in the stability and shape of the erythrocyte membrane. Heterotrimer with RHCE (RHAG)2(RHCE), that transports ammonium and its related derivative methylammonium, in both neutral and ionic forms, across the erythrocyte membrane. The transport of NH4(+) is electrogenic and masks the NH3 transport. Also, may act as a CO2 channel. Moreover in erythrocyte, regulates RHD membrane expression and is associated with rhesus blood group antigen expression. This is Ammonium transporter Rh type A from Mus musculus (Mouse).